Consider the following 1228-residue polypeptide: DNA-directed RNA polymerase subunit beta'' (1228 aa).

Zn(2+)-binding residues include Cys222, Cys296, Cys303, and Cys306.

It belongs to the RNA polymerase beta' chain family. RpoC2 subfamily. In plastids the minimal PEP RNA polymerase catalytic core is composed of four subunits: alpha, beta, beta', and beta''. When a (nuclear-encoded) sigma factor is associated with the core the holoenzyme is formed, which can initiate transcription. Zn(2+) is required as a cofactor.

Its subcellular location is the plastid. It is found in the chloroplast. The enzyme catalyses RNA(n) + a ribonucleoside 5'-triphosphate = RNA(n+1) + diphosphate. DNA-dependent RNA polymerase catalyzes the transcription of DNA into RNA using the four ribonucleoside triphosphates as substrates. The chain is DNA-directed RNA polymerase subunit beta'' from Gracilaria tenuistipitata var. liui (Red alga).